A 179-amino-acid chain; its full sequence is Crossover junction endodeoxyribonuclease RuvC (179 aa).

Active-site residues include D7, E67, and D140. 3 residues coordinate Mg(2+): D7, E67, and D140.

Belongs to the RuvC family. As to quaternary structure, homodimer which binds Holliday junction (HJ) DNA. The HJ becomes 2-fold symmetrical on binding to RuvC with unstacked arms; it has a different conformation from HJ DNA in complex with RuvA. In the full resolvosome a probable DNA-RuvA(4)-RuvB(12)-RuvC(2) complex forms which resolves the HJ. It depends on Mg(2+) as a cofactor.

The protein localises to the cytoplasm. It carries out the reaction Endonucleolytic cleavage at a junction such as a reciprocal single-stranded crossover between two homologous DNA duplexes (Holliday junction).. The RuvA-RuvB-RuvC complex processes Holliday junction (HJ) DNA during genetic recombination and DNA repair. Endonuclease that resolves HJ intermediates. Cleaves cruciform DNA by making single-stranded nicks across the HJ at symmetrical positions within the homologous arms, yielding a 5'-phosphate and a 3'-hydroxyl group; requires a central core of homology in the junction. The consensus cleavage sequence is 5'-(A/T)TT(C/G)-3'. Cleavage occurs on the 3'-side of the TT dinucleotide at the point of strand exchange. HJ branch migration catalyzed by RuvA-RuvB allows RuvC to scan DNA until it finds its consensus sequence, where it cleaves and resolves the cruciform DNA. This Salinibacter ruber (strain DSM 13855 / M31) protein is Crossover junction endodeoxyribonuclease RuvC.